The primary structure comprises 342 residues: S-adenosylmethionine:tRNA ribosyltransferase-isomerase (342 aa).

Belongs to the QueA family. As to quaternary structure, monomer.

It is found in the cytoplasm. It carries out the reaction 7-aminomethyl-7-carbaguanosine(34) in tRNA + S-adenosyl-L-methionine = epoxyqueuosine(34) in tRNA + adenine + L-methionine + 2 H(+). It participates in tRNA modification; tRNA-queuosine biosynthesis. Functionally, transfers and isomerizes the ribose moiety from AdoMet to the 7-aminomethyl group of 7-deazaguanine (preQ1-tRNA) to give epoxyqueuosine (oQ-tRNA). This Campylobacter jejuni subsp. jejuni serotype O:2 (strain ATCC 700819 / NCTC 11168) protein is S-adenosylmethionine:tRNA ribosyltransferase-isomerase.